We begin with the raw amino-acid sequence, 633 residues long: MSAGSERGAAATPGGLPAPCASKVELRLSCRHLLDRDPLTKSDPSVALLQQAQGQWVQVGRTEVVRSSLHPVFSKVFTVDYYFEEVQRLRFEVYDTHGPSGFSCQEDDFLGGMECTLGQPAQKWLLQVVMRVSVDVLGPAGHCAKHFLCCTESSHLARTGPSFLLRYDDLCLPWATAGAVRWWTCRGGHTQGWQIVAQKKVTRPLLLKFGRNAGKSTITVIAEDISGNNGYVELSFRARKLDDKDLFSKSDPFLELYRVNDDQGLQLVYRTEVVKNNLNPVWEAFKVSLSSLCSCEETRPLKCLVWDYDSRGKHDFIGEFSTTFEEMQKAFEEGQAQWDCVNPKYKQKRRSYKNSGVVVLADLKFHRVYSFLDYIMGGCQIHFTVAIDFTASNGDPRNSCSLHYINPYQPNEYLKALVSVGEICQDYDSDKRFSALGFGARIPPKYEVSHDFAINFNPEDDECEGIQGVVEAYQNCLPRVQLYGPTNVAPIISKVARVAAAEESTGKASQYYILLILTDGVVTDMADTREAIVRASRLPMSIIIVGVGNADFTDMQVLDGDDGVLRSPRGEPALRDIVQFVPFRELKNASPAALAKCVLAEVPKQVVEYYSHRGLPPRSLGVPAGEASPGCTP.

2 C2 domains span residues 2–133 (SAGS…MRVS) and 212–339 (NAGK…AQWD). The Ca(2+) site is built by Asp245, Asp251, Asp307, Asp309, and Asp315. One can recognise a VWFA domain in the interval 382–581 (HFTVAIDFTA…PALRDIVQFV (200 aa)).

The protein belongs to the copine family. Requires Ca(2+) as cofactor. As to expression, expressed in the brain, testis, thymus and small intestine.

Its subcellular location is the cytoplasm. It is found in the nucleus. It localises to the cell membrane. Calcium-dependent phospholipid-binding protein that may play a role in calcium-mediated intracellular processes. The protein is Copine-7 of Homo sapiens (Human).